The following is a 336-amino-acid chain: UDP-N-acetylglucosamine--N-acetylmuramyl-(pentapeptide) pyrophosphoryl-undecaprenol N-acetylglucosamine transferase (336 aa).

UDP-N-acetyl-alpha-D-glucosamine contacts are provided by Asn-102, Arg-144, Ser-172, and Gln-264.

It belongs to the glycosyltransferase 28 family. MurG subfamily.

It is found in the cell membrane. The enzyme catalyses di-trans,octa-cis-undecaprenyl diphospho-N-acetyl-alpha-D-muramoyl-L-alanyl-D-glutamyl-meso-2,6-diaminopimeloyl-D-alanyl-D-alanine + UDP-N-acetyl-alpha-D-glucosamine = di-trans,octa-cis-undecaprenyl diphospho-[N-acetyl-alpha-D-glucosaminyl-(1-&gt;4)]-N-acetyl-alpha-D-muramoyl-L-alanyl-D-glutamyl-meso-2,6-diaminopimeloyl-D-alanyl-D-alanine + UDP + H(+). It participates in cell wall biogenesis; peptidoglycan biosynthesis. In terms of biological role, cell wall formation. Catalyzes the transfer of a GlcNAc subunit on undecaprenyl-pyrophosphoryl-MurNAc-pentapeptide (lipid intermediate I) to form undecaprenyl-pyrophosphoryl-MurNAc-(pentapeptide)GlcNAc (lipid intermediate II). The sequence is that of UDP-N-acetylglucosamine--N-acetylmuramyl-(pentapeptide) pyrophosphoryl-undecaprenol N-acetylglucosamine transferase from Rubrobacter xylanophilus (strain DSM 9941 / JCM 11954 / NBRC 16129 / PRD-1).